Reading from the N-terminus, the 101-residue chain is Large ribosomal subunit protein eL30 (101 aa).

This sequence belongs to the eukaryotic ribosomal protein eL30 family.

This Pyrobaculum islandicum (strain DSM 4184 / JCM 9189 / GEO3) protein is Large ribosomal subunit protein eL30.